A 447-amino-acid polypeptide reads, in one-letter code: Lipid II isoglutaminyl synthase (glutamine-hydrolyzing) subunit MurT (447 aa).

Zn(2+) is bound by residues Cys205, Cys208, Cys227, and Cys230. Asp355 is a catalytic residue.

It belongs to the MurCDEF family. MurT subfamily. In terms of assembly, forms a heterodimer with GatD.

It carries out the reaction beta-D-GlcNAc-(1-&gt;4)-Mur2Ac(oyl-L-Ala-gamma-D-Glu-L-Lys-D-Ala-D-Ala)-di-trans,octa-cis-undecaprenyl diphosphate + L-glutamine + ATP + H2O = beta-D-GlcNAc-(1-&gt;4)-Mur2Ac(oyl-L-Ala-D-isoglutaminyl-L-Lys-D-Ala-D-Ala)-di-trans,octa-cis-undecaprenyl diphosphate + L-glutamate + ADP + phosphate + H(+). The enzyme catalyses beta-D-GlcNAc-(1-&gt;4)-Mur2Ac(oyl-L-Ala-gamma-D-Glu-L-Lys-D-Ala-D-Ala)-di-trans,octa-cis-undecaprenyl diphosphate + ATP = beta-D-GlcNAc-(1-&gt;4)-Mur2Ac(oyl-L-Ala-gamma-D-O-P-Glu-L-Lys-D-Ala-D-Ala)-di-trans,octa-cis-undecaprenyl diphosphate + ADP. It catalyses the reaction beta-D-GlcNAc-(1-&gt;4)-Mur2Ac(oyl-L-Ala-gamma-D-O-P-Glu-L-Lys-D-Ala-D-Ala)-di-trans,octa-cis-undecaprenyl diphosphate + NH4(+) = beta-D-GlcNAc-(1-&gt;4)-Mur2Ac(oyl-L-Ala-D-isoglutaminyl-L-Lys-D-Ala-D-Ala)-di-trans,octa-cis-undecaprenyl diphosphate + phosphate + H(+). The protein operates within cell wall biogenesis; peptidoglycan biosynthesis. Functionally, the lipid II isoglutaminyl synthase complex catalyzes the formation of alpha-D-isoglutamine in the cell wall lipid II stem peptide. The MurT subunit catalyzes the ATP-dependent amidation of D-glutamate residue of lipid II, converting it to an isoglutamine residue. The protein is Lipid II isoglutaminyl synthase (glutamine-hydrolyzing) subunit MurT of Streptococcus pneumoniae (strain ATCC BAA-255 / R6).